We begin with the raw amino-acid sequence, 356 residues long: Phosphate acyltransferase (356 aa).

This sequence belongs to the PlsX family. Homodimer. Probably interacts with PlsY.

The protein resides in the cytoplasm. The enzyme catalyses a fatty acyl-[ACP] + phosphate = an acyl phosphate + holo-[ACP]. The protein operates within lipid metabolism; phospholipid metabolism. Catalyzes the reversible formation of acyl-phosphate (acyl-PO(4)) from acyl-[acyl-carrier-protein] (acyl-ACP). This enzyme utilizes acyl-ACP as fatty acyl donor, but not acyl-CoA. In Bartonella bacilliformis (strain ATCC 35685 / KC583 / Herrer 020/F12,63), this protein is Phosphate acyltransferase.